The following is a 682-amino-acid chain: Polycomb protein suz12-B (682 aa).

The segment at 326 to 355 (DPSDPSTAPVAKPLSTRNSDTSTTESRIST) is disordered. The segment covering 340-354 (STRNSDTSTTESRIS) has biased composition (polar residues). Residues 408 to 431 (LHCPWCTLNCRKLYSLLKHLKLSH) form a C2H2-type zinc finger. The interval 523-599 (RLYFHSDSCM…NQMSQASMLF (77 aa)) is VEFS-box.

Belongs to the VEFS (VRN2-EMF2-FIS2-SU(Z)12) family. As to quaternary structure, component of the prc2/eed-ezh2 complex.

It is found in the nucleus. Polycomb group (PcG) protein. Component of the prc2/eed-ezh2 complex, which methylates 'Lys-9' and 'Lys-27' of histone H3, leading to transcriptional repression of the affected target gene. The sequence is that of Polycomb protein suz12-B (suz12b) from Danio rerio (Zebrafish).